A 491-amino-acid polypeptide reads, in one-letter code: Probable glycine dehydrogenase (decarboxylating) subunit 2 (491 aa).

Position 273 is an N6-(pyridoxal phosphate)lysine (lysine 273).

It belongs to the GcvP family. C-terminal subunit subfamily. The glycine cleavage system is composed of four proteins: P, T, L and H. In this organism, the P 'protein' is a heterodimer of two subunits. Pyridoxal 5'-phosphate serves as cofactor.

It carries out the reaction N(6)-[(R)-lipoyl]-L-lysyl-[glycine-cleavage complex H protein] + glycine + H(+) = N(6)-[(R)-S(8)-aminomethyldihydrolipoyl]-L-lysyl-[glycine-cleavage complex H protein] + CO2. Functionally, the glycine cleavage system catalyzes the degradation of glycine. The P protein binds the alpha-amino group of glycine through its pyridoxal phosphate cofactor; CO(2) is released and the remaining methylamine moiety is then transferred to the lipoamide cofactor of the H protein. The protein is Probable glycine dehydrogenase (decarboxylating) subunit 2 of Bacillus thuringiensis (strain Al Hakam).